We begin with the raw amino-acid sequence, 404 residues long: Phosphoglycerate kinase (404 aa).

Substrate contacts are provided by residues 22–24, Arg-37, 60–63, Arg-119, and Arg-156; these read DLN and HLGR. ATP is bound by residues Lys-206, Gly-302, Glu-333, and 359–362; that span reads GGDS.

The protein belongs to the phosphoglycerate kinase family. Monomer.

It is found in the cytoplasm. It catalyses the reaction (2R)-3-phosphoglycerate + ATP = (2R)-3-phospho-glyceroyl phosphate + ADP. Its pathway is carbohydrate degradation; glycolysis; pyruvate from D-glyceraldehyde 3-phosphate: step 2/5. This chain is Phosphoglycerate kinase, found in Clavibacter sepedonicus (Clavibacter michiganensis subsp. sepedonicus).